Reading from the N-terminus, the 110-residue chain is MINNVGIDIVENKRIKLKEEFIVKVLSANEIKTFNIKNKKQKREFLAGRWAIKEAIIKTLDQPISMNKIDIEYINDKPVIKNQELQNILISISHEKKYAVGIALKQCDNK.

D8 and E54 together coordinate Mg(2+).

This sequence belongs to the P-Pant transferase superfamily. AcpS family. Requires Mg(2+) as cofactor.

It is found in the cytoplasm. The enzyme catalyses apo-[ACP] + CoA = holo-[ACP] + adenosine 3',5'-bisphosphate + H(+). Functionally, transfers the 4'-phosphopantetheine moiety from coenzyme A to a Ser of acyl-carrier-protein. The polypeptide is Holo-[acyl-carrier-protein] synthase (Mycoplasma capricolum subsp. capricolum (strain California kid / ATCC 27343 / NCTC 10154)).